The chain runs to 368 residues: Putative transport protein bbp_117 (368 aa).

A run of 8 helical transmembrane segments spans residues 13–35 (VIFSLVFIFIMIISSLWIMRPFF), 39–61 (AWASMVVVATWPIFLKLQILLWG), 68–90 (VMMTFSLLLVFIIPIVCLVNSLI), 159–181 (HFGRFILHLIFMLIFSALLYWNG), 216–238 (LGVVVTALVQGILSGIGLAISGI), 248–270 (IIIFCLVQLGPLPVLIPAIIWLY), 277–299 (WGTVLLIWSCVVCILDHILRPIL), and 314–336 (GVIGGLIAFGMIGLFIGPVVLII).

It belongs to the autoinducer-2 exporter (AI-2E) (TC 2.A.86) family.

The protein resides in the cell membrane. The polypeptide is Putative transport protein bbp_117 (Buchnera aphidicola subsp. Baizongia pistaciae (strain Bp)).